A 404-amino-acid chain; its full sequence is Ubiquitin-like modifier-activating enzyme 5 (404 aa).

Ser-45 carries the phosphoserine modification. ATP contacts are provided by Gly-83, Asp-104, Lys-127, Asn-150, and Asn-184. Zn(2+) contacts are provided by Cys-226 and Cys-229. Cys-250 (glycyl thioester intermediate) is an active-site residue. Residues Cys-303 and Cys-308 each coordinate Zn(2+). A UFM1-interacting sequence (UIS) motif is present at residues 334–346 (IIHEDNEWGIELV). The segment at 347-377 (SEVSEEELKNFSGPVPDLPEGITVAYTIPKK) is linker. Ser-358 and Ser-393 each carry phosphoserine. The UFC1-binding sequence (UFC) signature appears at 389 to 404 (DSGESLEDLMAKMKNM).

It belongs to the ubiquitin-activating E1 family. UBA5 subfamily. As to quaternary structure, homodimer; homodimerization is required for UFM1 activation. Interacts (via UIS motif) with UFM1; binds UFM1 via a trans-binding mechanism in which UFM1 interacts with distinct sites in both subunits of the UBA5 homodimer. Interacts (via C-terminus) with UFC1. Interacts (via UIS motif) with GABARAPL2 and, with lower affinity, with GABARAP and GABARAPL1. Widely expressed.

It is found in the cytoplasm. The protein localises to the nucleus. It localises to the endoplasmic reticulum membrane. The protein resides in the golgi apparatus. Its function is as follows. E1-like enzyme which specifically catalyzes the first step in ufmylation. Activates UFM1 by first adenylating its C-terminal glycine residue with ATP, and thereafter linking this residue to the side chain of a cysteine residue in E1, yielding a UFM1-E1 thioester and free AMP. Activates UFM1 via a trans-binding mechanism, in which UFM1 interacts with distinct sites in both subunits of the UBA5 homodimer. Trans-binding also promotes stabilization of the UBA5 homodimer, and enhances ATP-binding. Transfer of UFM1 from UBA5 to the E2-like enzyme UFC1 also takes place using a trans mechanism. Ufmylation plays a key role in various processes, such as ribosome recycling, response to DNA damage, interferon response or reticulophagy (also called ER-phagy). Ufmylation is essential for erythroid differentiation of both megakaryocytes and erythrocytes. This chain is Ubiquitin-like modifier-activating enzyme 5, found in Homo sapiens (Human).